The sequence spans 258 residues: Adenylate kinase (258 aa).

Position 52–57 (52–57 (GAGKGT)) interacts with ATP. Positions 72–101 (ATGDMLRSQVAKKTALGKEAKKIMDQGGLV) are NMP. Residues Thr-73, Arg-78, 99 to 101 (GLV), 128 to 131 (GFPR), and Gln-135 each bind AMP. An LID region spans residues 169-206 (GRLVHPASGRSYHKIFNPPKEEMKDDVTGEPLIQRSDD). ATP-binding positions include Arg-170 and 179–180 (SY). 2 residues coordinate AMP: Arg-203 and Arg-214. Residue Gln-242 coordinates ATP.

This sequence belongs to the adenylate kinase family. AK2 subfamily. In terms of assembly, monomer.

It localises to the cytoplasm. The protein localises to the cytosol. It is found in the mitochondrion intermembrane space. The catalysed reaction is AMP + ATP = 2 ADP. In terms of biological role, catalyzes the reversible transfer of the terminal phosphate group between ATP and AMP. Plays an important role in cellular energy homeostasis and in adenine nucleotide metabolism. Adenylate kinase activity is critical for regulation of the phosphate utilization and the AMP de novo biosynthesis pathways. The chain is Adenylate kinase (adk1) from Aspergillus niger (strain ATCC MYA-4892 / CBS 513.88 / FGSC A1513).